We begin with the raw amino-acid sequence, 78 residues long: Small ribosomal subunit protein bS18B (78 aa).

This sequence belongs to the bacterial ribosomal protein bS18 family. As to quaternary structure, part of the 30S ribosomal subunit. Forms a tight heterodimer with protein bS6.

In terms of biological role, binds as a heterodimer with protein bS6 to the central domain of the 16S rRNA, where it helps stabilize the platform of the 30S subunit. The chain is Small ribosomal subunit protein bS18B from Streptomyces griseus subsp. griseus (strain JCM 4626 / CBS 651.72 / NBRC 13350 / KCC S-0626 / ISP 5235).